The primary structure comprises 268 residues: NH(3)-dependent NAD(+) synthetase (268 aa).

45–52 (GLSGGIDS) lines the ATP pocket. Position 51 (aspartate 51) interacts with Mg(2+). Arginine 129 is a deamido-NAD(+) binding site. Threonine 149 serves as a coordination point for ATP. A Mg(2+)-binding site is contributed by glutamate 154. Deamido-NAD(+) contacts are provided by lysine 162 and aspartate 169. The ATP site is built by lysine 178 and threonine 200. 260–261 (HK) is a deamido-NAD(+) binding site.

This sequence belongs to the NAD synthetase family. In terms of assembly, homodimer.

It catalyses the reaction deamido-NAD(+) + NH4(+) + ATP = AMP + diphosphate + NAD(+) + H(+). It functions in the pathway cofactor biosynthesis; NAD(+) biosynthesis; NAD(+) from deamido-NAD(+) (ammonia route): step 1/1. Its function is as follows. Catalyzes the ATP-dependent amidation of deamido-NAD to form NAD. Uses ammonia as a nitrogen source. In Halobacterium salinarum (strain ATCC 29341 / DSM 671 / R1), this protein is NH(3)-dependent NAD(+) synthetase.